The primary structure comprises 323 residues: tRNA U34 carboxymethyltransferase (323 aa).

Carboxy-S-adenosyl-L-methionine is bound by residues Lys91, Trp105, Lys110, Gly130, 181–182 (IE), Met196, Tyr200, and Arg315.

It belongs to the class I-like SAM-binding methyltransferase superfamily. CmoB family. In terms of assembly, homotetramer.

The enzyme catalyses carboxy-S-adenosyl-L-methionine + 5-hydroxyuridine(34) in tRNA = 5-carboxymethoxyuridine(34) in tRNA + S-adenosyl-L-homocysteine + H(+). Catalyzes carboxymethyl transfer from carboxy-S-adenosyl-L-methionine (Cx-SAM) to 5-hydroxyuridine (ho5U) to form 5-carboxymethoxyuridine (cmo5U) at position 34 in tRNAs. This Edwardsiella ictaluri (strain 93-146) protein is tRNA U34 carboxymethyltransferase.